The following is a 457-amino-acid chain: tRNA modification GTPase MnmE (457 aa).

R24, E81, and K124 together coordinate (6S)-5-formyl-5,6,7,8-tetrahydrofolate. The region spanning 220 to 379 (GIQLVLAGAP…LKQKILHVVG (160 aa)) is the TrmE-type G domain. N230 lines the K(+) pocket. GTP contacts are provided by residues 230–235 (NVGKSS), 249–255 (TPIAGTT), and 274–277 (DTAG). S234 provides a ligand contact to Mg(2+). The K(+) site is built by T249, I251, and T254. Position 255 (T255) interacts with Mg(2+). K457 serves as a coordination point for (6S)-5-formyl-5,6,7,8-tetrahydrofolate.

Belongs to the TRAFAC class TrmE-Era-EngA-EngB-Septin-like GTPase superfamily. TrmE GTPase family. In terms of assembly, homodimer. Heterotetramer of two MnmE and two MnmG subunits. The cofactor is K(+).

It localises to the cytoplasm. Functionally, exhibits a very high intrinsic GTPase hydrolysis rate. Involved in the addition of a carboxymethylaminomethyl (cmnm) group at the wobble position (U34) of certain tRNAs, forming tRNA-cmnm(5)s(2)U34. The protein is tRNA modification GTPase MnmE of Polynucleobacter asymbioticus (strain DSM 18221 / CIP 109841 / QLW-P1DMWA-1) (Polynucleobacter necessarius subsp. asymbioticus).